The primary structure comprises 325 residues: tRNA-dihydrouridine(16) synthase (325 aa).

FMN is bound by residues Pro12 to Gln14 and Gln73. Residue Cys103 is the Proton donor of the active site. FMN is bound by residues Lys144, Asn205–Glu207, and Gly229–Arg230.

It belongs to the Dus family. DusC subfamily. FMN serves as cofactor.

It catalyses the reaction 5,6-dihydrouridine(16) in tRNA + NADP(+) = uridine(16) in tRNA + NADPH + H(+). The enzyme catalyses 5,6-dihydrouridine(16) in tRNA + NAD(+) = uridine(16) in tRNA + NADH + H(+). Functionally, catalyzes the synthesis of 5,6-dihydrouridine (D), a modified base found in the D-loop of most tRNAs, via the reduction of the C5-C6 double bond in target uridines. Specifically modifies U16 in tRNAs. This is tRNA-dihydrouridine(16) synthase from Haemophilus ducreyi (strain 35000HP / ATCC 700724).